Here is a 191-residue protein sequence, read N- to C-terminus: Adenylate kinase (191 aa).

12–17 is an ATP binding site; that stretch reads GSGKTT. Residues 33-62 are NMP; the sequence is STGDLLRAEVASGSELGKLIDSFISKGNLV. AMP is bound by residues Thr-34, Arg-39, 60 to 62, 87 to 90, and Gln-94; these read NLV and GYPR. The tract at residues 129–135 is LID; sequence GRARGAD. Arg-130 serves as a coordination point for ATP. Residues Arg-132 and Arg-144 each contribute to the AMP site. Arg-172 contacts ATP.

The protein belongs to the adenylate kinase family. In terms of assembly, monomer.

The protein resides in the cytoplasm. The enzyme catalyses AMP + ATP = 2 ADP. Its pathway is purine metabolism; AMP biosynthesis via salvage pathway; AMP from ADP: step 1/1. Catalyzes the reversible transfer of the terminal phosphate group between ATP and AMP. Plays an important role in cellular energy homeostasis and in adenine nucleotide metabolism. The protein is Adenylate kinase of Campylobacter fetus subsp. fetus (strain 82-40).